Consider the following 150-residue polypeptide: Ribonuclease pancreatic delta-type (150 aa).

Residues 1–25 (MGLEKSFILFSLLVLVLGWVQPSLG) form the signal peptide. Substrate is bound at residue Arg-35. Catalysis depends on His-37, which acts as the Proton acceptor. Disulfide bonds link Cys-51–Cys-110, Cys-65–Cys-121, Cys-83–Cys-136, and Cys-90–Cys-98. Substrate is bound by residues 66 to 70 (KRVNT), Lys-91, and Arg-111. His-145 serves as the catalytic Proton donor.

The protein belongs to the pancreatic ribonuclease family. Monomer.

It localises to the secreted. It catalyses the reaction an [RNA] containing cytidine + H2O = an [RNA]-3'-cytidine-3'-phosphate + a 5'-hydroxy-ribonucleotide-3'-[RNA].. The enzyme catalyses an [RNA] containing uridine + H2O = an [RNA]-3'-uridine-3'-phosphate + a 5'-hydroxy-ribonucleotide-3'-[RNA].. Its function is as follows. Endonuclease that catalyzes the cleavage of RNA on the 3' side of pyrimidine nucleotides. Acts on single-stranded and double-stranded RNA. The sequence is that of Ribonuclease pancreatic delta-type (Rnase1d) from Rattus norvegicus (Rat).